The primary structure comprises 128 residues: Glycine cleavage system H protein (128 aa).

The Lipoyl-binding domain maps to 23 to 105 (VATVGISDHA…YEGGWLFKVQ (83 aa)). The residue at position 64 (Lys-64) is an N6-lipoyllysine.

Belongs to the GcvH family. In terms of assembly, the glycine cleavage system is composed of four proteins: P, T, L and H. The cofactor is (R)-lipoate.

Functionally, the glycine cleavage system catalyzes the degradation of glycine. The H protein shuttles the methylamine group of glycine from the P protein to the T protein. The chain is Glycine cleavage system H protein from Alcanivorax borkumensis (strain ATCC 700651 / DSM 11573 / NCIMB 13689 / SK2).